The following is a 439-amino-acid chain: Adenylosuccinate synthetase (439 aa).

GTP is bound by residues 13 to 19 (GDEGKGK) and 41 to 43 (GHT). D14 functions as the Proton acceptor in the catalytic mechanism. The Mg(2+) site is built by D14 and G41. IMP is bound by residues 14–17 (DEGK), 39–42 (NAGH), T130, R144, Q226, T241, and R313. The active-site Proton donor is the H42. Residue 309–315 (ASTGRQR) participates in substrate binding. GTP is bound by residues R315, 341–343 (KLD), and 422–424 (STG).

Belongs to the adenylosuccinate synthetase family. As to quaternary structure, homodimer. Requires Mg(2+) as cofactor.

It is found in the cytoplasm. It catalyses the reaction IMP + L-aspartate + GTP = N(6)-(1,2-dicarboxyethyl)-AMP + GDP + phosphate + 2 H(+). It functions in the pathway purine metabolism; AMP biosynthesis via de novo pathway; AMP from IMP: step 1/2. Its function is as follows. Plays an important role in the de novo pathway of purine nucleotide biosynthesis. Catalyzes the first committed step in the biosynthesis of AMP from IMP. The sequence is that of Adenylosuccinate synthetase from Acinetobacter baylyi (strain ATCC 33305 / BD413 / ADP1).